The sequence spans 429 residues: Neuronal pentraxin-2 (429 aa).

An N-terminal signal peptide occupies residues 1 to 14; sequence MLALLTVGVALAVA. Residues Asn146 and Asn187 are each glycosylated (N-linked (GlcNAc...) asparagine). The Pentraxin (PTX) domain maps to 221–422; sequence DAFKVSLPLR…GASKWPVETC (202 aa). Cys251 and Cys311 are oxidised to a cystine. Ca(2+) contacts are provided by Asn275, Glu353, Gln354, Asp355, and Gln365. N-linked (GlcNAc...) asparagine glycosylation occurs at Asn391.

In terms of assembly, homooligomer or heterooligomer (probably pentamer) with neuronal pentraxin receptor (NPTXR). The cofactor is Ca(2+).

It localises to the secreted. In terms of biological role, likely to play role in the modification of cellular properties that underlie long-term plasticity. Binds to agar matrix in a calcium-dependent manner. The sequence is that of Neuronal pentraxin-2 (Nptx2) from Mus musculus (Mouse).